Reading from the N-terminus, the 87-residue chain is U3-theraphotoxin-Hhn1g (87 aa).

The N-terminal stretch at Met1–Ala24 is a signal peptide. Positions Ser25–Arg52 are excised as a propeptide. 3 cysteine pairs are disulfide-bonded: Cys54-Cys67, Cys61-Cys72, and Cys66-Cys79.

Belongs to the neurotoxin 10 (Hwtx-1) family. 51 (Hntx-8) subfamily. Hntx-8 sub-subfamily. Expressed by the venom gland.

The protein resides in the secreted. Functionally, ion channel inhibitor. This chain is U3-theraphotoxin-Hhn1g, found in Cyriopagopus hainanus (Chinese bird spider).